A 569-amino-acid polypeptide reads, in one-letter code: Proline--tRNA ligase (569 aa).

This sequence belongs to the class-II aminoacyl-tRNA synthetase family. ProS type 1 subfamily. Homodimer.

It localises to the cytoplasm. It carries out the reaction tRNA(Pro) + L-proline + ATP = L-prolyl-tRNA(Pro) + AMP + diphosphate. Its function is as follows. Catalyzes the attachment of proline to tRNA(Pro) in a two-step reaction: proline is first activated by ATP to form Pro-AMP and then transferred to the acceptor end of tRNA(Pro). As ProRS can inadvertently accommodate and process non-cognate amino acids such as alanine and cysteine, to avoid such errors it has two additional distinct editing activities against alanine. One activity is designated as 'pretransfer' editing and involves the tRNA(Pro)-independent hydrolysis of activated Ala-AMP. The other activity is designated 'posttransfer' editing and involves deacylation of mischarged Ala-tRNA(Pro). The misacylated Cys-tRNA(Pro) is not edited by ProRS. This chain is Proline--tRNA ligase, found in Campylobacter jejuni subsp. doylei (strain ATCC BAA-1458 / RM4099 / 269.97).